A 138-amino-acid polypeptide reads, in one-letter code: Large ribosomal subunit protein uL29 (138 aa).

The segment at 1-79 is large ribosomal subunit protein uL29; that stretch reads MAKSKMLDLR…TNKVIKADYN (79 aa). A unknown region spans residues 80 to 138; it reads KAVEEAEKAGKEVRAKQRKFLEEQYGQQSQTKVNEADIQKAMQAAEQETVEPDTKGETK. The tract at residues 103 to 138 is disordered; that stretch reads QYGQQSQTKVNEADIQKAMQAAEQETVEPDTKGETK.

Belongs to the universal ribosomal protein uL29 family.

The protein is Large ribosomal subunit protein uL29 of Mycoplasma capricolum subsp. capricolum (strain California kid / ATCC 27343 / NCTC 10154).